Consider the following 157-residue polypeptide: Protein Smg homolog (157 aa).

The protein belongs to the Smg family.

The protein is Protein Smg homolog of Colwellia psychrerythraea (strain 34H / ATCC BAA-681) (Vibrio psychroerythus).